Reading from the N-terminus, the 70-residue chain is Large ribosomal subunit protein bL31 (70 aa).

Residues Cys16, Cys18, Cys37, and Cys40 each contribute to the Zn(2+) site.

The protein belongs to the bacterial ribosomal protein bL31 family. Type A subfamily. As to quaternary structure, part of the 50S ribosomal subunit. It depends on Zn(2+) as a cofactor.

Its function is as follows. Binds the 23S rRNA. In Alteromonas mediterranea (strain DSM 17117 / CIP 110805 / LMG 28347 / Deep ecotype), this protein is Large ribosomal subunit protein bL31.